A 196-amino-acid polypeptide reads, in one-letter code: Pro-FMRFamide-related neuropeptide VF (196 aa).

The signal sequence occupies residues 1 to 21 (MEIISLKRFILLMLATSSLLT). Positions 22–57 (SNIFCTDESRIPSLYSKKNYDKYSEPRGDLGWEKER) are excised as a propeptide. Phenylalanine 92 carries the post-translational modification Phenylalanine amide. 2 consecutive propeptides follow at residues 95–99 (NMEEE) and 115–121 (NREDSLS). Phenylalanine 131 carries the post-translational modification Phenylalanine amide. The propeptide occupies 134–196 (TIAAKSITKT…IDDAELKQEK (63 aa)).

It belongs to the FARP (FMRFamide related peptide) family. In terms of tissue distribution, expressed in hypothalamus, where it is localized to the dorsomedial hypothalamic nucleus (DMH), paraventricular nucleus (PVN), and to neuronal projections from the PVN to the neurosecretory zone of the median eminence.

It localises to the secreted. Functionally, may act in concert with kisspeptin, through opposing affects, to regulate the activity of gonadotropin-releasing hormone (GnRH) neurons across the seasons, leading to an annual change in fertility and the cyclical seasonal transition from non-breeding to breeding season. In terms of biological role, efficiently inhibits forskolin-induced production of cAMP. Acts as a potent negative regulator of gonadotropin synthesis and secretion. Induces secretion of prolactin. Efficiently inhibits forskolin-induced production of cAMP. Blocks morphine-induced analgesia. Its function is as follows. Shows no inhibitory activity of forskolin-induced production of cAMP. The sequence is that of Pro-FMRFamide-related neuropeptide VF from Ovis aries (Sheep).